The primary structure comprises 314 residues: Fibrinogen-like protein 1 (314 aa).

The N-terminal stretch at Met-1–Ala-22 is a signal peptide. Positions Asn-25 to Glu-59 form a coiled coil. A Fibrinogen C-terminal domain is found at Leu-76–Asp-308. Cystine bridges form between Cys-85–Cys-114 and Cys-250–Cys-263.

In terms of assembly, homodimer. Interacts (via the Fibrinogen C-terminal domain) with LAG3 (via Ig-like domains 1 and 2).

The protein localises to the secreted. In terms of biological role, immune suppressive molecule that inhibits antigen-specific T-cell activation by acting as a major ligand of LAG3. Responsible for LAG3 T-cell inhibitory function. Binds LAG3 independently from MHC class II (MHC-II). Secreted by, and promotes growth of, hepatocytes. The protein is Fibrinogen-like protein 1 of Mesocricetus auratus (Golden hamster).